A 262-amino-acid polypeptide reads, in one-letter code: MAVVLASPAAGGVAAGGFVVRNLDLFYGTHQALHQISMTIPERAVTAIIGPSGCGKSTFLRCLNRMNDLVPDARIQGHVSFRGQDLYAPGADPVEIRYRIGMIFQKPNPFPKSIYENVAFGPRINGYDGDLDEIVEGALRRAALWDEVKDRLRKPALTLSGGQQQRLCIARALAVNPEVLLMDEPTSALDPIATGKIEELMTSLKQEYTIVLVTHSMQQAARVSDYTAFFLDGRLVEMDRTERIFSTPSDRRTEDYITGRFG.

The region spanning 18–257 (FVVRNLDLFY…PSDRRTEDYI (240 aa)) is the ABC transporter domain. An ATP-binding site is contributed by 50-57 (GPSGCGKS).

Belongs to the ABC transporter superfamily. Phosphate importer (TC 3.A.1.7) family. In terms of assembly, the complex is composed of two ATP-binding proteins (PstB), two transmembrane proteins (PstC and PstA) and a solute-binding protein (PstS).

The protein resides in the cell membrane. The enzyme catalyses phosphate(out) + ATP + H2O = ADP + 2 phosphate(in) + H(+). In terms of biological role, part of the ABC transporter complex PstSACB involved in phosphate import. Responsible for energy coupling to the transport system. In Symbiobacterium thermophilum (strain DSM 24528 / JCM 14929 / IAM 14863 / T), this protein is Phosphate import ATP-binding protein PstB 2.